We begin with the raw amino-acid sequence, 349 residues long: UPF0324 inner membrane protein YeiH (349 aa).

Topologically, residues 1–12 are periplasmic; sequence MTELTLQNHCRT. The chain crosses the membrane as a helical span at residues 13 to 35; sequence MWHFIPGLALSAVITGVALWGGA. Residues 36–38 lie on the Cytoplasmic side of the membrane; the sequence is IPA. Residues 39–61 traverse the membrane as a helical segment; the sequence is VAGAGFSALTLAILLGMVIGNTI. Topologically, residues 62-99 are periplasmic; the sequence is YPQIWKQCDGGVLFAKQHLLRLGIILYGFRLTFSQIAD. Residues 100 to 122 traverse the membrane as a helical segment; that stretch reads VGISGIVIDVLTLSSTFMLACFL. At 123-131 the chain is on the cytoplasmic side; sequence GQKVFGLDR. The chain crosses the membrane as a helical span at residues 132–151; it reads HTSWLIGAGSSICGAAAVLA. Residues 152 to 162 are Periplasmic-facing; it reads TEPVVKAEASK. A helical transmembrane segment spans residues 163–185; it reads VTVAVATVVIFGTIAIFLYPAMY. Topologically, residues 186–261 are cytoplasmic; the sequence is PLLAHWFSPE…SPATGAEKSK (76 aa). Residues 262 to 284 form a helical membrane-spanning segment; that stretch reads ITIPWFAIFFIVVAIFNSFHLLP. Residues 285–290 lie on the Periplasmic side of the membrane; it reads KAVVDM. A helical membrane pass occupies residues 291 to 313; the sequence is LVTLDTVLLAMAMAALGLTTHVS. Residues 314–322 are Cytoplasmic-facing; it reads ALKKAGAKP. The helical transmembrane segment at 323–345 threads the bilayer; sequence LLMALALFAWLIIGGGAINVLIH. Residues 346–349 lie on the Periplasmic side of the membrane; that stretch reads SLIA.

Belongs to the UPF0324 family.

The protein localises to the cell inner membrane. This is UPF0324 inner membrane protein YeiH (yeiH) from Salmonella typhimurium (strain LT2 / SGSC1412 / ATCC 700720).